A 425-amino-acid chain; its full sequence is Serine--tRNA ligase (425 aa).

231–233 contributes to the L-serine binding site; sequence TAE. Position 262–264 (262–264) interacts with ATP; that stretch reads RRE. Glu285 serves as a coordination point for L-serine. 349–352 serves as a coordination point for ATP; sequence EISS. Residue Ser385 participates in L-serine binding.

The protein belongs to the class-II aminoacyl-tRNA synthetase family. Type-1 seryl-tRNA synthetase subfamily. In terms of assembly, homodimer. The tRNA molecule binds across the dimer.

The protein localises to the cytoplasm. The enzyme catalyses tRNA(Ser) + L-serine + ATP = L-seryl-tRNA(Ser) + AMP + diphosphate + H(+). It catalyses the reaction tRNA(Sec) + L-serine + ATP = L-seryl-tRNA(Sec) + AMP + diphosphate + H(+). It functions in the pathway aminoacyl-tRNA biosynthesis; selenocysteinyl-tRNA(Sec) biosynthesis; L-seryl-tRNA(Sec) from L-serine and tRNA(Sec): step 1/1. Catalyzes the attachment of serine to tRNA(Ser). Is also able to aminoacylate tRNA(Sec) with serine, to form the misacylated tRNA L-seryl-tRNA(Sec), which will be further converted into selenocysteinyl-tRNA(Sec). The protein is Serine--tRNA ligase of Aquifex aeolicus (strain VF5).